The sequence spans 276 residues: Lectin-like protein At3g16530 (276 aa).

The N-terminal stretch at 1–19 (MQIHKLCFLVLFLANAAFA) is a signal peptide. Residues 20 to 270 (VKFNFDSFDG…RHDIWSWSFE (251 aa)) are legume-lectin like. Residues N79, N129, and N196 are each glycosylated (N-linked (GlcNAc...) asparagine).

This sequence belongs to the leguminous lectin family.

The protein resides in the secreted. It is found in the extracellular space. Its subcellular location is the apoplast. The chain is Lectin-like protein At3g16530 from Arabidopsis thaliana (Mouse-ear cress).